Consider the following 254-residue polypeptide: Probable derlin-2 homolog (254 aa).

The Cytoplasmic portion of the chain corresponds to 1–17; it reads MAQPFEDWYKNLPIVTK. Residues 18-38 traverse the membrane as a helical segment; that stretch reads IYMTGCVVTSVSVYLGLVGPL. Residues 39 to 95 are Lumenal-facing; that stretch reads RLYLNFPLVFGKYEFWRLFTNFFFYDEIGMNFFFHMYFLVRHSRLLEESSFRGRSAD. A helical transmembrane segment spans residues 96–116; that stretch reads YLFMWIFGSFLLLIMDAFLFY. Over 117 to 118 the chain is Cytoplasmic; sequence TK. The helical transmembrane segment at 119 to 139 threads the bilayer; that stretch reads IVTKVLFLAPSIAFMVIYVWS. At 140–146 the chain is on the lumenal side; it reads RRNPNMH. The helical transmembrane segment at 147–167 threads the bilayer; it reads ISFLGLFTFSAPYLPWVILIM. At 168 to 254 the chain is on the cytoplasmic side; it reads GYLFNHDLTT…FLNEDDLDQQ (87 aa).

This sequence belongs to the derlin family.

The protein resides in the endoplasmic reticulum membrane. May be involved in the degradation process of specific misfolded endoplasmic reticulum (ER) luminal proteins. May also be involved in endoplasmic reticulum stress-induced pre-emptive quality control, a mechanism that selectively attenuates the translocation of newly synthesized proteins into the endoplasmic reticulum and reroutes them to the cytosol for proteasomal degradation. The chain is Probable derlin-2 homolog (derl2) from Dictyostelium discoideum (Social amoeba).